Here is a 305-residue protein sequence, read N- to C-terminus: tRNA pseudouridine synthase B (305 aa).

The active-site Nucleophile is the aspartate 39.

It belongs to the pseudouridine synthase TruB family. Type 1 subfamily.

The enzyme catalyses uridine(55) in tRNA = pseudouridine(55) in tRNA. Responsible for synthesis of pseudouridine from uracil-55 in the psi GC loop of transfer RNAs. The protein is tRNA pseudouridine synthase B of Staphylococcus aureus (strain MSSA476).